We begin with the raw amino-acid sequence, 1012 residues long: Putative cellulose synthase-like protein D5 (1012 aa).

Positions 1-85 are disordered; that stretch reads MSGDYANYTV…APSSNKSLLV (85 aa). Positions 20 to 37 are enriched in low complexity; the sequence is PSGGAPPAAPSAGGARPG. Over residues 57-69 the composition is skewed to basic and acidic residues; that stretch reads GGGDDGAKMDRRL. 2 helical membrane passes run 150–170 and 180–200; these read ILSP…LFLV and ALWL…SWLL. The active site involves aspartate 280. Positions 597–620 are disordered; it reads PRQGSEAMPGAGGGRSGGGSVGGD. Residues 606-618 are compositionally biased toward gly residues; sequence GAGGGRSGGGSVG. The active site involves aspartate 717. 6 helical membrane passes run 799 to 819, 825 to 845, 871 to 891, 914 to 934, 948 to 968, and 978 to 998; these read LFLI…QFIV, TFLS…LLEV, LAAV…SFTL, SLFI…VVGV, LLGG…FAKG, and TIVY…WITI.

Belongs to the glycosyltransferase 2 family. Plant cellulose synthase-like D subfamily.

The protein localises to the golgi apparatus membrane. In terms of biological role, thought to be a Golgi-localized beta-glycan synthase that polymerize the backbones of noncellulosic polysaccharides (hemicelluloses) of plant cell wall. This chain is Putative cellulose synthase-like protein D5 (CSLD5), found in Oryza sativa subsp. indica (Rice).